The chain runs to 84 residues: Cytochrome b559 subunit alpha (84 aa).

Residues 24–38 (IIHAVTLPAIFIAGF) form a helical membrane-spanning segment. Residue His-26 coordinates heme.

It belongs to the PsbE/PsbF family. In terms of assembly, heterodimer of an alpha subunit and a beta subunit. PSII is composed of 1 copy each of membrane proteins PsbA, PsbB, PsbC, PsbD, PsbE, PsbF, PsbH, PsbI, PsbJ, PsbK, PsbL, PsbM, PsbT, PsbX, PsbY, Psb30/Ycf12, peripheral proteins PsbO, CyanoQ (PsbQ), PsbU, PsbV and a large number of cofactors. It forms dimeric complexes. Requires heme b as cofactor.

It localises to the cellular thylakoid membrane. Its function is as follows. This b-type cytochrome is tightly associated with the reaction center of photosystem II (PSII). PSII is a light-driven water:plastoquinone oxidoreductase that uses light energy to abstract electrons from H(2)O, generating O(2) and a proton gradient subsequently used for ATP formation. It consists of a core antenna complex that captures photons, and an electron transfer chain that converts photonic excitation into a charge separation. The polypeptide is Cytochrome b559 subunit alpha (Prochlorococcus marinus (strain MIT 9301)).